The sequence spans 1066 residues: Allene oxide synthase-lipoxygenase protein (1066 aa).

The allene oxide synthase stretch occupies residues 1 to 371 (MTWKNFGFEI…LKIGSLVPAG (371 aa)). Residue Tyr-353 coordinates heme. The tract at residues 372 to 1066 (QNAIYNVEVE…PERIPNGTAI (695 aa)) is arachidonate 8-lipoxygenase. The PLAT domain maps to 374–490 (AIYNVEVETG…KDMVLFPGEA (117 aa)). Ca(2+) contacts are provided by His-387, Gly-389, Thr-390, Asp-391, Asn-416, Asp-417, Glu-419, Asp-452, and Asp-454. The Lipoxygenase domain occupies 491–1066 (TLPFNEVPAI…PERIPNGTAI (576 aa)). 5 residues coordinate Fe cation: His-757, His-762, His-943, Asn-947, and Ile-1066.

In the C-terminal section; belongs to the lipoxygenase family. As to quaternary structure, dimer. The cofactor is Ca(2+). Fe cation serves as cofactor. Requires heme as cofactor.

The protein resides in the cytoplasm. It is found in the membrane. The catalysed reaction is (5Z,8Z,11Z,14Z)-eicosatetraenoate + O2 = (8R)-hydroperoxy-(5Z,9E,11Z,14Z)-eicosatetraenoate. The enzyme catalyses (8R)-hydroperoxy-(5Z,9E,11Z,14Z)-eicosatetraenoate = 8,9-epoxy-(5Z,9E,11Z,14Z)-eicosatetraenoate + H2O. It carries out the reaction (5Z,8Z,11Z,14Z,17Z)-eicosapentaenoate + O2 = (8R)-hydroperoxy-(5Z,9E,11Z,14Z,17Z)-eicosapentaenoate. It catalyses the reaction (4Z,7Z,10Z,13Z,16Z,19Z)-docosahexaenoate + O2 = 10-hydroperoxy-(4Z,7Z,11E,13Z,16Z,19Z)-docosahexaenoate. The catalysed reaction is (8Z,11Z,14Z)-eicosatrienoate + O2 = (8R)-hydroperoxy-(9E,11Z,14Z)-eicosatrienoate. The enzyme catalyses (8Z,11Z,14Z)-eicosatrienoate + O2 = 10-hydroperoxy-(8Z,11Z,14Z)-eicosatrienoate. It carries out the reaction (8Z,11Z,14Z)-eicosatrienoate + O2 = 11-hydroperoxy-(8Z,12E,14Z)-eicosatrienoate. The protein operates within lipid metabolism; arachidonate metabolism. It participates in lipid metabolism; fatty acid metabolism. Its activity is regulated as follows. Lipoxygenase activity is stimulated by calcium, sodium, lithium and potassium ions. Calcium binding promotes interaction with membranes and thus facilitates access to substrates. Its function is as follows. Bifunctional enzyme which is responsible for allene oxide biosynthesis via a two-step reaction; first the lipoxygenase reaction that converts polyunsaturated fatty acids such as arachidonate ((5Z,8Z,11Z,14Z)-eicosatetraenoate) into a (8R)-hydroperoxide intermediate ((8R)-hydroperoxy-(5Z,9E,11Z,14Z)-eicosatetraenoate) followed by the allene oxide synthase reaction that converts the hydroperoxide intermediate ((8R)-hydroperoxy-(5Z,9E,11Z,14Z)-eicosatetraenoate) into the allene oxide (8,9-epoxy-(5Z,9E,11Z,14Z)-eicosatetraenoate). Shows preference for C20 or C22 highly polyunsaturated fatty acids and no activity with C18 fatty acids in vitro. Fatty acid allene oxides are intermediates in the formation of cyclopentenones or hydrolytic products in marine systems, most notably the prostanoid-related clavulones. The polypeptide is Allene oxide synthase-lipoxygenase protein (Plexaura homomalla (Black sea rod)).